The following is a 447-amino-acid chain: Probable glycine dehydrogenase (decarboxylating) subunit 1 (447 aa).

The protein belongs to the GcvP family. N-terminal subunit subfamily. The glycine cleavage system is composed of four proteins: P, T, L and H. In this organism, the P 'protein' is a heterodimer of two subunits.

It carries out the reaction N(6)-[(R)-lipoyl]-L-lysyl-[glycine-cleavage complex H protein] + glycine + H(+) = N(6)-[(R)-S(8)-aminomethyldihydrolipoyl]-L-lysyl-[glycine-cleavage complex H protein] + CO2. The glycine cleavage system catalyzes the degradation of glycine. The P protein binds the alpha-amino group of glycine through its pyridoxal phosphate cofactor; CO(2) is released and the remaining methylamine moiety is then transferred to the lipoamide cofactor of the H protein. The polypeptide is Probable glycine dehydrogenase (decarboxylating) subunit 1 (Azorhizobium caulinodans (strain ATCC 43989 / DSM 5975 / JCM 20966 / LMG 6465 / NBRC 14845 / NCIMB 13405 / ORS 571)).